A 149-amino-acid chain; its full sequence is Nucleoside deoxyribosyltransferase (149 aa).

Residue Glu-90 is the Nucleophile of the active site.

Belongs to the nucleoside deoxyribosyltransferase family.

It carries out the reaction 2-deoxy-D-ribosyl-base(1) + base(2) = 2-deoxy-D-ribosyl-base(2) + base(1).. It participates in nucleotide metabolism; nucleotide salvage pathway. Catalyzes the cleavage of the glycosidic bond of 2'-deoxyribonucleosides and the transfer of the deoxyribosyl moiety to an acceptor purine or pyrimidine base. The polypeptide is Nucleoside deoxyribosyltransferase (ntd) (Lactobacillus johnsonii (strain CNCM I-12250 / La1 / NCC 533)).